Consider the following 418-residue polypeptide: Voltage-gated ClC-type chloride channel ClcB (418 aa).

Met1 is a topological domain (cytoplasmic). A helical transmembrane segment spans residues 2 to 22 (FHRLLIATVVGILAAFAVAGF). The Periplasmic segment spans residues 23-53 (RHAMLLLEWLFLNNDSGSLVNAATNLSPWRR). Residues 54–74 (LLTPALGGLAAGLLLMGWQKF) traverse the membrane as a helical segment. Residues 75-145 (TQQRPHAPTD…QRFTPRQEWK (71 aa)) lie on the Cytoplasmic side of the membrane. A helical transmembrane segment spans residues 146 to 166 (LWIACGAAAGMAAAYRAPLAG). The Periplasmic portion of the chain corresponds to 167-177 (SLFIAEVLFGT). The chain crosses the membrane as a helical span at residues 178–200 (MMLASLGPVIISAVVALLVSNLI). Residues 201-221 (NHSDALLYNVQLSVTVQARDY) are Cytoplasmic-facing. The helical transmembrane segment at 222-242 (ALIISTGVLAGLCGPLLLTLM) threads the bilayer. Topologically, residues 243–257 (NACHRGFVSLKLAPP) are periplasmic. The helical transmembrane segment at 258–278 (WQLALGGLIVGLLSLFTPAVW) threads the bilayer. The Cytoplasmic portion of the chain corresponds to 279-290 (GNGYSTVQSFLT). Residues 291–311 (APPLLMIIAGIFLCKLCAVLA) traverse the membrane as a helical segment. Topologically, residues 312-315 (SSGS) are periplasmic. The chain crosses the membrane as a helical span at residues 316-336 (GAPGGVFTPTLFIGLAIGMLY). Topologically, residues 337 to 351 (GRSLGLWFPDGEEIT) are cytoplasmic. A helical membrane pass occupies residues 352 to 372 (LLLGLTGMATLLAATTHAPIM). Residues 373-379 (STLMICE) lie on the Periplasmic side of the membrane. The helical transmembrane segment at 380 to 400 (MTGEYQLLPGLLIACVIASVI) threads the bilayer. The Cytoplasmic segment spans residues 401-418 (SRTLHRDSIYRQHTAQHS).

It belongs to the chloride channel (TC 2.A.49) family. ClcB subfamily.

The protein localises to the cell inner membrane. In terms of biological role, probably acts as an electrical shunt for an outwardly-directed proton pump that is linked to amino acid decarboxylation, as part of the extreme acid resistance (XAR) response. The polypeptide is Voltage-gated ClC-type chloride channel ClcB (clcB) (Escherichia coli (strain K12)).